The sequence spans 57 residues: Potassium channel toxin alpha-KTx 26.3 (57 aa).

Residues 1–15 form the signal peptide; sequence MSGLSVFILIALVLS. A propeptide spanning residues 16-24 is cleaved from the precursor; that stretch reads VIIDVLNNS. 3 cysteine pairs are disulfide-bonded: cysteine 30–cysteine 48, cysteine 34–cysteine 53, and cysteine 38–cysteine 55.

Belongs to the short scorpion toxin superfamily. Potassium channel inhibitor family. Alpha-KTx 26 subfamily. In terms of tissue distribution, expressed by the venom gland.

It localises to the secreted. Recombinant toxin that reversibly inhibits the potassium current of mKv1.3/KCNA3 channel stably expressed in COS7 cells (IC(50)=150 nM). In Mesobuthus gibbosus (Mediterranean checkered scorpion), this protein is Potassium channel toxin alpha-KTx 26.3.